We begin with the raw amino-acid sequence, 155 residues long: S-ribosylhomocysteine lyase (155 aa).

Fe cation contacts are provided by His-57, His-61, and Cys-124.

It belongs to the LuxS family. Homodimer. It depends on Fe cation as a cofactor.

The catalysed reaction is S-(5-deoxy-D-ribos-5-yl)-L-homocysteine = (S)-4,5-dihydroxypentane-2,3-dione + L-homocysteine. Involved in the synthesis of autoinducer 2 (AI-2) which is secreted by bacteria and is used to communicate both the cell density and the metabolic potential of the environment. The regulation of gene expression in response to changes in cell density is called quorum sensing. Catalyzes the transformation of S-ribosylhomocysteine (RHC) to homocysteine (HC) and 4,5-dihydroxy-2,3-pentadione (DPD). The polypeptide is S-ribosylhomocysteine lyase (Listeria monocytogenes serovar 1/2a (strain ATCC BAA-679 / EGD-e)).